The primary structure comprises 507 residues: RNA polymerase I-specific transcription initiation factor RRN11 (507 aa).

The span at 37–47 (KSTTTDSLPTP) shows a compositional bias: polar residues. 2 disordered regions span residues 37–76 (KSTT…LQQK) and 89–124 (GEIY…SDEE). Acidic residues predominate over residues 97-108 (SETDSQEEETEE). Residues 109 to 124 (GGEHDTGIDKEDSDEE) are compositionally biased toward basic and acidic residues.

In terms of assembly, component of the core factor (CF) complex, which consists of RRN6, RRN7 and RRN11. The CF heterotrimer may further dimerize to form a hexamer. RRN11 interacts with RRN6, RRN7 and SPT15.

It localises to the nucleus. The protein resides in the nucleolus. Its function is as follows. Acts as a component of the core factor (CF) complex which is essential for the initiation of rDNA transcription by RNA polymerase I. After binding of UAF (upstream activation factor) to an upstream element of the promoter, CF is recruited in a SPT15/TBP-dependent manner to form a preinitiation complex. The protein is RNA polymerase I-specific transcription initiation factor RRN11 (RRN11) of Saccharomyces cerevisiae (strain ATCC 204508 / S288c) (Baker's yeast).